The following is a 253-amino-acid chain: Ipsdienol dehydrogenase (253 aa).

NAD(+)-binding positions include 12 to 40 (VTGG…FSRN) and Asp63. Substrate is bound at residue Ser149. Tyr162 acts as the Proton acceptor in catalysis. Lys166 provides a ligand contact to NAD(+).

It belongs to the short-chain dehydrogenases/reductases (SDR) family. In terms of tissue distribution, specifically expressed in male midguts. Expressed at higher level in the anterior midgut of fed males.

The protein localises to the cytoplasm. The protein resides in the cytosol. The catalysed reaction is (4R)-ipsdienol + NADP(+) = ipsdienone + NADPH + H(+). It catalyses the reaction (4R)-ipsdienol + NAD(+) = ipsdienone + NADH + H(+). Catalyzes the oxidation of racemic ipsdienol and (4R)-(-)-ipsdienol to form ipsdienone (2-methyl-6-methylene-2,7-octadien-4-one), an intermediate in the biosynthesis of pheromonal ipsdienol in male pine engraver beetles. In contrast, (4S)-(+)-ipsdienol is not a substrate. The polypeptide is Ipsdienol dehydrogenase (Ips pini (Pine engraver beetle)).